Reading from the N-terminus, the 126-residue chain is Large ribosomal subunit protein uL14 (126 aa).

Belongs to the universal ribosomal protein uL14 family. Part of the 50S ribosomal subunit. Forms a cluster with proteins L3 and L19. In the 70S ribosome, L14 and L19 interact and together make contacts with the 16S rRNA in bridges B5 and B8.

In terms of biological role, binds to 23S rRNA. Forms part of two intersubunit bridges in the 70S ribosome. The sequence is that of Large ribosomal subunit protein uL14 from Persephonella marina (strain DSM 14350 / EX-H1).